A 405-amino-acid polypeptide reads, in one-letter code: MSTIKKVVLAYSGGLDTSVILKWLQETYDCEVVTFTADIGQGEEVAPARAKAETLGVKEIYIEDLREEFCRDYVFPMFRANTLYEGEYLLGTSIARPLIAKRLAEIASATGADAVAHGATGKGNDQVRFELGVYALQPDIQVIAPWREWDLTSREKLLAYAETHGIPVEGKRGGRSPYSMDANLLHISYEGGPLEDPWFEPEESMWRWTTSPEASADQAAYLELDYRCGDIVAINGEVLSPAKVLESLNQLGSKHGIGRLDLVENRYVGMKSRGCYETPAGTIMLKAHRALESLTLDREVTHLKDELMPRYANLIYNGYWWSPERSLLQQLIDGSQVTVNGTVRLKLYKGNVVVVGRRSETDSLFAPEIATFEDDAGAYNQQDAEGFIKLNALRLRIEALKKQTH.

ATP contacts are provided by residues 10-18 (AYSGGLDTS) and Ala-37. Tyr-88 and Ser-93 together coordinate L-citrulline. Gly-118 is a binding site for ATP. L-aspartate-binding residues include Thr-120, Asn-124, and Asp-125. Asn-124 is a binding site for L-citrulline. The L-citrulline site is built by Arg-128, Ser-179, Ser-188, Glu-264, and Tyr-276.

Belongs to the argininosuccinate synthase family. Type 1 subfamily. Homotetramer.

It localises to the cytoplasm. It catalyses the reaction L-citrulline + L-aspartate + ATP = 2-(N(omega)-L-arginino)succinate + AMP + diphosphate + H(+). It functions in the pathway amino-acid biosynthesis; L-arginine biosynthesis; L-arginine from L-ornithine and carbamoyl phosphate: step 2/3. This chain is Argininosuccinate synthase, found in Nitrosococcus oceani (strain ATCC 19707 / BCRC 17464 / JCM 30415 / NCIMB 11848 / C-107).